A 99-amino-acid polypeptide reads, in one-letter code: Protein Frey (99 aa).

Residues 7 to 29 (GALYPRAGLSLFLLYLVLAAVLL) traverse the membrane as a helical segment. Residues 65–88 (PKHPWPRGPRPLLSRAQQRKRDGP) form a disordered region.

In terms of assembly, interacts with SPPL2C (via active sites); the interaction stabilizes FREY1 protein and inhibits SPPL2C proteolytic activity. Interacts with IZUMO1; the interaction retains IZUMO1 at the endoplasmic reticulum membrane and coordinates IZUMO1 complex assembly.

The protein resides in the endoplasmic reticulum membrane. Key regulator for male fertility expressed transiently in round spermatids where it recruits IZUMO1 at the endoplasmic reticulum (ER) membrane and coordinates the oolemmal binding multimeric complex (IZUMO1 complex) assembly. Upon complete assembly of the IZUMO1 complex, its ER retention is released, facilitating IZUMO1 complex export to the acrosome. Through the interaction with SPPL2C, inhibits its intramembrane protease activity directly accessing the catalytic center of an I-CLiP. This is Protein Frey from Ailuropoda melanoleuca (Giant panda).